A 303-amino-acid chain; its full sequence is Inosose dehydratase (303 aa).

It belongs to the IolE/MocC family. Requires glutathione as cofactor. It depends on Co(2+) as a cofactor. The cofactor is Mn(2+).

The catalysed reaction is scyllo-inosose = 3D-3,5/4-trihydroxycyclohexane-1,2-dione + H2O. The protein operates within polyol metabolism; myo-inositol degradation into acetyl-CoA; acetyl-CoA from myo-inositol: step 2/7. Functionally, catalyzes the dehydration of inosose (2-keto-myo-inositol, 2KMI or 2,4,6/3,5-pentahydroxycyclohexanone) to 3D-(3,5/4)-trihydroxycyclohexane-1,2-dione (D-2,3-diketo-4-deoxy-epi-inositol). The protein is Inosose dehydratase of Halalkalibacterium halodurans (strain ATCC BAA-125 / DSM 18197 / FERM 7344 / JCM 9153 / C-125) (Bacillus halodurans).